A 245-amino-acid polypeptide reads, in one-letter code: Oncostatin-M (245 aa).

The first 26 residues, methionine 1–glycine 26, serve as a signal peptide directing secretion. 2 disulfide bridges follow: cysteine 28–cysteine 135 and cysteine 71–cysteine 177. Asparagine 97 is a glycosylation site (N-linked (GlcNAc...) asparagine). 2 disordered regions span residues serine 143 to glutamine 171 and tryptophan 197 to arginine 245. A compositionally biased stretch (pro residues) spans glutamine 153 to proline 166. Residues arginine 203 to arginine 218 are compositionally biased toward basic residues. A propeptide spanning residues histidine 207–arginine 245 is cleaved from the precursor.

This sequence belongs to the LIF/OSM family. Post-translationally, propeptide processing is not important for receptor binding activity but may be important growth-inhibitory activity.

It is found in the secreted. Growth regulator. Inhibits the proliferation of a number of tumor cell lines. It regulates cytokine production, including IL-6, G-CSF and GM-CSF from endothelial cells. Uses both type I OSM receptor (heterodimers composed of LIFR and IL6ST) and type II OSM receptor (heterodimers composed of OSMR and IL6ST). Involved in the maturation of fetal hepatocytes, thereby promoting liver development and regeneration. This is Oncostatin-M (OSM) from Bos taurus (Bovine).